Here is a 259-residue protein sequence, read N- to C-terminus: MQHTPRRRFGQNFLVDSQTVTDIVHALHPRREDVMVEIGPGLGALTQPLLQSLEHLHVVEIDRDIVKRLRNEFSAKRLTVHEGDALEFDFSSLGESLRVVGNLPYNISTPLLFHLSRFTDHLRDMHFMLQKEVVARMVAKPSTSDYGRLSVMLQCRFEMEQLFIVPPECFHPPPKVQSAVVRMIPLKKPLIEASQEKLFAEIVSAAFSQRRKILRNTLRDYLTGEDYLKLGIDSNLRAENLSITQYVAITNYFNRVRSG.

6 residues coordinate S-adenosyl-L-methionine: Asn-12, Leu-14, Gly-39, Glu-60, Asp-84, and Asn-102.

Belongs to the class I-like SAM-binding methyltransferase superfamily. rRNA adenine N(6)-methyltransferase family. RsmA subfamily.

Its subcellular location is the cytoplasm. It carries out the reaction adenosine(1518)/adenosine(1519) in 16S rRNA + 4 S-adenosyl-L-methionine = N(6)-dimethyladenosine(1518)/N(6)-dimethyladenosine(1519) in 16S rRNA + 4 S-adenosyl-L-homocysteine + 4 H(+). In terms of biological role, specifically dimethylates two adjacent adenosines (A1518 and A1519) in the loop of a conserved hairpin near the 3'-end of 16S rRNA in the 30S particle. May play a critical role in biogenesis of 30S subunits. The polypeptide is Ribosomal RNA small subunit methyltransferase A (Nitrosospira multiformis (strain ATCC 25196 / NCIMB 11849 / C 71)).